Here is a 204-residue protein sequence, read N- to C-terminus: Hydrophilin YNL190W (204 aa).

The N-terminal stretch at 1 to 20 (MKFSSVTAITLATVATVATA) is a signal peptide. Low complexity predominate over residues 35–46 (SDGSLTTTTSTH). Residues 35-179 (SDGSLTTTTS…ARKNNAAPGP (145 aa)) form a disordered region. Residues 47–59 (TTHKYGKFNKTSK) are compositionally biased toward basic residues. Asn55, Asn64, Asn75, Asn84, Asn95, Asn104, Asn115, Asn124, Asn135, Asn144, and Asn155 each carry an N-linked (GlcNAc...) asparagine glycan. A compositionally biased stretch (basic residues) spans 67-79 (GTHKYGKFNKTSK). A compositionally biased stretch (basic residues) spans 87 to 99 (GTHKYGKFNKTSK). The segment covering 107-119 (GTHKYGKFNKTSK) has biased composition (basic residues). Residues 127-139 (GTHKYGKFNKTSK) are compositionally biased toward basic residues. Positions 147–156 (GTHKYGKFNK) are enriched in basic residues. Asn174 carries the GPI-anchor amidated asparagine lipid modification. A propeptide spans 175-204 (AAPGPSNFNSIKLFGVTAGSAAVAGALLLL) (removed in mature form).

The protein belongs to the PGA14 family. In terms of processing, the GPI-anchor is attached to the protein in the endoplasmic reticulum and serves to target the protein to the cell surface. There, the glucosamine-inositol phospholipid moiety is cleaved off and the GPI-modified mannoprotein is covalently attached via its lipidless GPI glycan remnant to the 1,6-beta-glucan of the outer cell wall layer.

The protein resides in the secreted. It localises to the cell wall. The protein localises to the membrane. In terms of biological role, hydrophilin which is essential to overcome the simple stress of the desiccation-rehydration process. The protein is Hydrophilin YNL190W of Saccharomyces cerevisiae (strain ATCC 204508 / S288c) (Baker's yeast).